The primary structure comprises 199 residues: FMN-dependent NADH:quinone oxidoreductase (199 aa).

Residues Ser-9, 15 to 17 (SNS), and 95 to 98 (MYNF) contribute to the FMN site.

Belongs to the azoreductase type 1 family. As to quaternary structure, homodimer. FMN is required as a cofactor.

It catalyses the reaction 2 a quinone + NADH + H(+) = 2 a 1,4-benzosemiquinone + NAD(+). The catalysed reaction is N,N-dimethyl-1,4-phenylenediamine + anthranilate + 2 NAD(+) = 2-(4-dimethylaminophenyl)diazenylbenzoate + 2 NADH + 2 H(+). Functionally, quinone reductase that provides resistance to thiol-specific stress caused by electrophilic quinones. Its function is as follows. Also exhibits azoreductase activity. Catalyzes the reductive cleavage of the azo bond in aromatic azo compounds to the corresponding amines. This chain is FMN-dependent NADH:quinone oxidoreductase, found in Aromatoleum aromaticum (strain DSM 19018 / LMG 30748 / EbN1) (Azoarcus sp. (strain EbN1)).